Consider the following 543-residue polypeptide: MTKFIFVTGGVVSSLGKGITAASLAAVLEARGLKVTMTKMDPYINVDPGTMSPFQHGEVFVTEDGAETDLDLGYYERFLRHSKMSKTNNFTSGRIYQTVLNKERRGDYLGGTVQVIPHITDEIKHRIHASGEGHDIAIIEIGGTVGDIESLPFMEAVRQMQVELGRNRAMLMHLTLVPYISSAGETKTKPTQHSVKELRSIGLQPDVLICRSEHAIGEENRRKIALFTNVEERAVITCEDADTIYQIPRTLYEQDLDDIICERFGIDAPEADLSDWDKVVDGLLNAQGKVTVAIVGKYVELPDAYKSINEALLHAGITHKTQVEIDYVDAEALETDDSLLARLEQADSILVPGGFGERGKLGKMRAIKFARENKMPYLGICLGMQLAVIEYATNVLGLEADSTEFNRKAAEPIIGLITEWLDEKGELQVRTDDSDLGGTMRLGSQKAELVEGSKLHQIYGAKLITERHRHRYEMNNRYIEPLEQAGMSISGYSAKQHLVESVEIADHPWFIGVQFHPEFTSSPREGHPLFASFVKAAIDHQNI.

The tract at residues 1–266 (MTKFIFVTGG…DDIICERFGI (266 aa)) is amidoligase domain. Ser-13 contributes to the CTP binding site. Position 13 (Ser-13) interacts with UTP. Residues 14–19 (SLGKGI) and Asp-71 contribute to the ATP site. Mg(2+)-binding residues include Asp-71 and Glu-140. CTP contacts are provided by residues 147–149 (DIE), 187–192 (KTKPTQ), and Lys-223. Residues 187 to 192 (KTKPTQ) and Lys-223 each bind UTP. The Glutamine amidotransferase type-1 domain maps to 291–543 (TVAIVGKYVE…VKAAIDHQNI (253 aa)). An L-glutamine-binding site is contributed by Gly-354. Cys-381 (nucleophile; for glutamine hydrolysis) is an active-site residue. L-glutamine contacts are provided by residues 382-385 (LGMQ), Glu-404, and Arg-471. Active-site residues include His-516 and Glu-518.

This sequence belongs to the CTP synthase family. Homotetramer.

It catalyses the reaction UTP + L-glutamine + ATP + H2O = CTP + L-glutamate + ADP + phosphate + 2 H(+). The catalysed reaction is L-glutamine + H2O = L-glutamate + NH4(+). It carries out the reaction UTP + NH4(+) + ATP = CTP + ADP + phosphate + 2 H(+). It functions in the pathway pyrimidine metabolism; CTP biosynthesis via de novo pathway; CTP from UDP: step 2/2. Its activity is regulated as follows. Allosterically activated by GTP, when glutamine is the substrate; GTP has no effect on the reaction when ammonia is the substrate. The allosteric effector GTP functions by stabilizing the protein conformation that binds the tetrahedral intermediate(s) formed during glutamine hydrolysis. Inhibited by the product CTP, via allosteric rather than competitive inhibition. In terms of biological role, catalyzes the ATP-dependent amination of UTP to CTP with either L-glutamine or ammonia as the source of nitrogen. Regulates intracellular CTP levels through interactions with the four ribonucleotide triphosphates. This is CTP synthase from Psychrobacter sp. (strain PRwf-1).